Consider the following 179-residue polypeptide: Sec-independent protein translocase protein TatB (179 aa).

Residues 2-22 (FNGVGWGEVVVLLLIGLFVFG) form a helical membrane-spanning segment. Residues 98–109 (LLGDDPPAAPSL) show a composition bias toward low complexity. Positions 98–179 (LLGDDPPAAP…TEVPFDSDAT (82 aa)) are disordered.

This sequence belongs to the TatB family. The Tat system comprises two distinct complexes: a TatABC complex, containing multiple copies of TatA, TatB and TatC subunits, and a separate TatA complex, containing only TatA subunits. Substrates initially bind to the TatABC complex, which probably triggers association of the separate TatA complex to form the active translocon.

Its subcellular location is the cell membrane. Its function is as follows. Part of the twin-arginine translocation (Tat) system that transports large folded proteins containing a characteristic twin-arginine motif in their signal peptide across membranes. Together with TatC, TatB is part of a receptor directly interacting with Tat signal peptides. TatB may form an oligomeric binding site that transiently accommodates folded Tat precursor proteins before their translocation. The protein is Sec-independent protein translocase protein TatB of Frankia casuarinae (strain DSM 45818 / CECT 9043 / HFP020203 / CcI3).